A 619-amino-acid chain; its full sequence is MEFPGGNDNYLTITGPSHPFLSGAETFHTPSLGDEEFEIPPISLDSDPSLAVSDVVGHFDDLADPSSSQDGSFSAQYGVQTLDMPVGMTHGLMEQGGGLLSGGLTMDLDHSIGTQYSANPPVTIDVPMTDMTSGLMGHSQLTTIDQSELSSQLGLSLGGGTILPPAQSPEDRLSTTPSPTNSLHEDGVDDFRRQLPAQKTVVVETGKKQKAPKKRKKKDPNEPQKPVSAYALFFRDTQAAIKGQNPNATFGEVSKIVASMWDSLGEEQKQVYKRKTEAAKKEYLKALAAYKDNQECQATVETVELDPVPQSQTPSPPPVTAADPASPAPASTESPALPPCIIVNSTLSSYVANQASSGPGGQPNITKLIITKQMLPSSITMSQGGMVTVIPATVVTSRGLQVGQTSTATIQPSQQAQIVTRSVLQAAAAAAASMQLPPPRLQPPPLQQMPQPPTQQQVTILQQPPPLQAMQQPPPQKVRINLQQQPPPLQSKIVPPPTLKIQTTVVPPTVESSPEQPMNSSPEAHTVEATSPETICEMIADVVPEVESPSQMDVELVSGSPVALSPQPRCVRSGCENPPVVSKDWDNEYCSNECVVKHCRDVFLAWVASRNPNSVVFVK.

Disordered stretches follow at residues L155–V227 and D306–P335. T176 carries the phosphothreonine modification. Phosphoserine is present on residues S178 and S182. The span at L183–R193 shows a compositional bias: basic and acidic residues. Over residues K208–K218 the composition is skewed to basic residues. The short motif at K213 to K218 is the Nuclear localization signal element. The segment at residues P223–K291 is a DNA-binding region (HMG box). T313 carries the phosphothreonine modification. At S315 the chain carries Phosphoserine. Residues T320–P335 are compositionally biased toward low complexity. R479 carries the asymmetric dimethylarginine modification. S531, S548, S550, S558, S560, and S565 each carry phosphoserine.

In terms of assembly, component of the PNUTS-PP1 phosphatase complex, composed of PPP1R10/PNUTS, TOX4, WDR82 and PPP1CA or PPP1CB or PPP1CC. Interacts with PPP1R10/PNUTS. Interacts with FOXO1 and CREB1 (increased by cAMP); FOXO1 and CREB1 are required for full induction of TOX4-dependent activity and the interactions are inhibited by insulin.

It is found in the nucleus. The protein resides in the chromosome. Its activity is regulated as follows. In liver, recruited to target gene promoters following treatment with dexamethasone and cAMP. Binding is decreased in presence of insulin. Transcription factor that modulates cell fate reprogramming from the somatic state to the pluripotent and neuronal fate. In liver, controls the expression of hormone-regulated gluconeogenic genes such as G6PC1 and PCK1. This regulation is independent of the insulin receptor activation. Also acts as a regulatory component of protein phosphatase 1 (PP1) complexes. Component of the PNUTS-PP1 protein phosphatase complex, a PP1 complex that regulates RNA polymerase II transcription pause-release. PNUTS-PP1 also plays a role in the control of chromatin structure and cell cycle progression during the transition from mitosis into interphase. This Mus musculus (Mouse) protein is TOX high mobility group box family member 4.